The chain runs to 601 residues: DNA ligase (601 aa).

D258 contributes to the ATP binding site. The active-site N6-AMP-lysine intermediate is K260. ATP is bound by residues R265, R280, E310, F350, R427, and K433. Residues D568–V601 are disordered.

This sequence belongs to the ATP-dependent DNA ligase family. Mg(2+) serves as cofactor.

The catalysed reaction is ATP + (deoxyribonucleotide)n-3'-hydroxyl + 5'-phospho-(deoxyribonucleotide)m = (deoxyribonucleotide)n+m + AMP + diphosphate.. DNA ligase that seals nicks in double-stranded DNA during DNA replication, DNA recombination and DNA repair. The protein is DNA ligase of Saccharolobus islandicus (strain Y.G.57.14 / Yellowstone #1) (Sulfolobus islandicus).